A 235-amino-acid chain; its full sequence is Ribitol-5-phosphate cytidylyltransferase (235 aa).

CTP-binding positions include leucine 7–glycine 10, glycine 82–serine 88, and serine 113.

Belongs to the IspD/TarI cytidylyltransferase family. TarI subfamily.

The catalysed reaction is D-ribitol 5-phosphate + CTP + H(+) = CDP-L-ribitol + diphosphate. It participates in cell wall biogenesis; poly(ribitol phosphate) teichoic acid biosynthesis. Functionally, catalyzes the transfer of the cytidylyl group of CTP to D-ribitol 5-phosphate. The sequence is that of Ribitol-5-phosphate cytidylyltransferase from Streptococcus pneumoniae (strain Hungary19A-6).